The following is a 351-amino-acid chain: Anthranilate phosphoribosyltransferase (351 aa).

5-phospho-alpha-D-ribose 1-diphosphate is bound by residues glycine 80, 83–84 (GD), threonine 88, 90–93 (NIST), 108–116 (KHGNRSVTS), and serine 120. Glycine 80 is a binding site for anthranilate. Residue serine 92 coordinates Mg(2+). Asparagine 111 is an anthranilate binding site. Arginine 166 lines the anthranilate pocket. Residues aspartate 229 and glutamate 230 each contribute to the Mg(2+) site.

The protein belongs to the anthranilate phosphoribosyltransferase family. In terms of assembly, homodimer. Requires Mg(2+) as cofactor.

The enzyme catalyses N-(5-phospho-beta-D-ribosyl)anthranilate + diphosphate = 5-phospho-alpha-D-ribose 1-diphosphate + anthranilate. It functions in the pathway amino-acid biosynthesis; L-tryptophan biosynthesis; L-tryptophan from chorismate: step 2/5. Catalyzes the transfer of the phosphoribosyl group of 5-phosphorylribose-1-pyrophosphate (PRPP) to anthranilate to yield N-(5'-phosphoribosyl)-anthranilate (PRA). This Chlorobium chlorochromatii (strain CaD3) protein is Anthranilate phosphoribosyltransferase.